Consider the following 153-residue polypeptide: UPF0756 membrane protein NT01CX_1209 (153 aa).

The next 4 helical transmembrane spans lie at 5–25 (IILL…LGIA), 45–65 (ENHF…IPII), 83–103 (IVCF…VGFL), and 113–133 (IILG…GPLI).

It belongs to the UPF0756 family.

It is found in the cell membrane. The polypeptide is UPF0756 membrane protein NT01CX_1209 (Clostridium novyi (strain NT)).